We begin with the raw amino-acid sequence, 931 residues long: Synaptopodin (931 aa).

Disordered stretches follow at residues E56–I78 and A113–Y243. The residue at position 134 (S134) is a Phosphoserine. Residues T136 to Q148 show a composition bias toward basic and acidic residues. 2 stretches are compositionally biased toward polar residues: residues Q153–G164 and P188–P200. Residues S202, S222, and S258 each carry the phosphoserine modification. Residues P214–S232 are compositionally biased toward low complexity. A disordered region spans residues G280–L420. Composition is skewed to polar residues over residues H282–S293 and I309–S370. Over residues D373–R384 the composition is skewed to basic and acidic residues. Phosphoserine is present on residues S490 and S514. Disordered stretches follow at residues R542 to V591 and S691 to G711. T549 bears the Phosphothreonine mark. The short motif at P551–Y554 is the PPxY motif element. Positions E556–R568 are enriched in polar residues. Phosphoserine is present on S569. Residues S569–S580 are compositionally biased toward low complexity. The short motif at P570 to Y573 is the PPxY motif element. 4 positions are modified to phosphoserine: S691, S742, S746, and S767. The residue at position 771 (T771) is a Phosphothreonine. Positions S775–G918 are disordered. Over residues S816 to S841 the composition is skewed to low complexity. S835 carries the phosphoserine modification. R850 carries the omega-N-methylarginine modification. S856 carries the phosphoserine modification. The span at V874–S895 shows a compositional bias: polar residues.

Belongs to the synaptopodin family. Interacts with BAIAP1. Interacts with actin. Interacts (via PPxY motifs) with WWC1 (via WW domains). Post-translationally, O-glycosylated. Expressed at high levels in brain and at moderate, but still significant levels in the heart, skeletal muscle, lung and kidney. In brain, expressed in the cerebral cortex, hippocampus, olfactory bulb and striatum.

It is found in the cytoplasm. The protein localises to the cytoskeleton. Its subcellular location is the cell junction. The protein resides in the tight junction. It localises to the perikaryon. It is found in the cell projection. The protein localises to the dendritic spine. Its subcellular location is the postsynaptic density. The protein resides in the synapse. It localises to the cytosol. In terms of biological role, actin-associated protein that may play a role in modulating actin-based shape and motility of dendritic spines and renal podocyte foot processes. Seems to be essential for the formation of spine apparatuses in spines of telencephalic neurons, which is involved in synaptic plasticity. The polypeptide is Synaptopodin (Synpo) (Rattus norvegicus (Rat)).